A 481-amino-acid chain; its full sequence is Proline--tRNA ligase 2 (481 aa).

This sequence belongs to the class-II aminoacyl-tRNA synthetase family. ProS type 3 subfamily. Homodimer.

The protein localises to the cytoplasm. It carries out the reaction tRNA(Pro) + L-proline + ATP = L-prolyl-tRNA(Pro) + AMP + diphosphate. Catalyzes the attachment of proline to tRNA(Pro) in a two-step reaction: proline is first activated by ATP to form Pro-AMP and then transferred to the acceptor end of tRNA(Pro). This is Proline--tRNA ligase 2 from Clostridioides difficile (strain 630) (Peptoclostridium difficile).